Consider the following 217-residue polypeptide: UPF0502 protein VF_A0604 (217 aa).

Belongs to the UPF0502 family.

This Aliivibrio fischeri (strain ATCC 700601 / ES114) (Vibrio fischeri) protein is UPF0502 protein VF_A0604.